Reading from the N-terminus, the 180-residue chain is Nucleoside-triphosphatase THEP1 (180 aa).

Residues Gly-8 to Ala-15 and Val-100 to Gly-107 each bind ATP.

The protein belongs to the THEP1 NTPase family.

It catalyses the reaction a ribonucleoside 5'-triphosphate + H2O = a ribonucleoside 5'-diphosphate + phosphate + H(+). Functionally, has nucleotide phosphatase activity towards ATP, GTP, CTP, TTP and UTP. May hydrolyze nucleoside diphosphates with lower efficiency. The chain is Nucleoside-triphosphatase THEP1 from Picrophilus torridus (strain ATCC 700027 / DSM 9790 / JCM 10055 / NBRC 100828 / KAW 2/3).